The primary structure comprises 916 residues: Translation initiation factor IF-2 (916 aa).

Residues 58-317 (LEAEGHLPGA…GVTVPRGDGG (260 aa)) are disordered. Positions 120–142 (EKVAASEAADAKPAAGAPADTAK) are enriched in low complexity. A compositionally biased stretch (pro residues) spans 195–206 (SNIPRPAPPRPG). Gly residues-rich tracts occupy residues 214–227 (RPGG…GGRP) and 235–282 (SAGG…GRGG). Residues 283–294 (GKSKARKSKRAK) show a composition bias toward basic residues. The region spanning 409-583 (IRPPVVTVMG…LTADAGLDLR (175 aa)) is the tr-type G domain. The segment at 418 to 425 (GHVDHGKT) is G1. 418-425 (GHVDHGKT) contributes to the GTP binding site. Positions 443–447 (GITQH) are G2. Residues 468–471 (DTPG) are G3. Residues 468-472 (DTPGH) and 522-525 (NKVD) each bind GTP. The tract at residues 522–525 (NKVD) is G4. Residues 558-560 (SAR) are G5.

This sequence belongs to the TRAFAC class translation factor GTPase superfamily. Classic translation factor GTPase family. IF-2 subfamily.

Its subcellular location is the cytoplasm. Its function is as follows. One of the essential components for the initiation of protein synthesis. Protects formylmethionyl-tRNA from spontaneous hydrolysis and promotes its binding to the 30S ribosomal subunits. Also involved in the hydrolysis of GTP during the formation of the 70S ribosomal complex. The protein is Translation initiation factor IF-2 of Leifsonia xyli subsp. xyli (strain CTCB07).